The primary structure comprises 401 residues: Ureide permease 4 (401 aa).

The Extracellular portion of the chain corresponds to 1-10 (MYVVESKAGA). A helical transmembrane segment spans residues 11 to 31 (IGCMILSLCCLGSWPAILTLL). Over 32 to 40 (ERRGRLPQH) the chain is Cytoplasmic. The chain crosses the membrane as a helical span at residues 41 to 61 (TFLDFATANLLAAIVIAFSLG). Residues 62 to 81 (EIGKSTFLKPDFTTQLPQDN) lie on the Extracellular side of the membrane. The helical transmembrane segment at 82 to 102 (WPSVLLAVAGGVLLSIGNLAT) threads the bilayer. Residues 103-104 (QY) are Cytoplasmic-facing. A helical membrane pass occupies residues 105-125 (AFAFVGLSVTEVITASITVVI). Residues 126 to 141 (GTTLNYFLDNKINKAE) lie on the Extracellular side of the membrane. The chain crosses the membrane as a helical span at residues 142–162 (ILFPGVGCFLIAVFLGAAVHA). Topologically, residues 163–231 (SNAADVKEKL…KRAIKVFGKS (69 aa)) are cytoplasmic. ATP is bound at residue 224–231 (AIKVFGKS). The helical transmembrane segment at 232 to 252 (IMIGLFITLFAGISLSLFSPA) threads the bilayer. Residues 253-275 (FNLATNDQWSTLPKGVPKLVVYT) lie on the Extracellular side of the membrane. Residues 276–296 (AFFYFSIAGFLISLILNLIFL) traverse the membrane as a helical segment. Residues 297–318 (YRPMVGLARSSLKKYIYDSKGR) are Cytoplasmic-facing. Residues 319–339 (GWAVFAGFLCGFGNGLQFMGG) form a helical membrane-spanning segment. The Extracellular portion of the chain corresponds to 340-344 (QAAGY). The chain crosses the membrane as a helical span at residues 345-365 (AAADSVQALPLVSTFWGIVLF). Residues 366 to 374 (GEYRKSSKR) are Cytoplasmic-facing. Residues 375-395 (TYALLVSMLAMFVAAVAILMA) form a helical membrane-spanning segment. Residues 396 to 401 (SSGHRK) are Extracellular-facing.

The protein belongs to the plant ureide permease (TC 2.A.7.19) family. As to expression, expressed in developing seedlings, flower filaments and stigma, and the top and bottom parts of carpels in siliques.

The protein resides in the membrane. Proton-coupled transporter that transports a wide spectrum of oxo derivatives of heterocyclic nitrogen compounds. This Arabidopsis thaliana (Mouse-ear cress) protein is Ureide permease 4.